Consider the following 430-residue polypeptide: Enolase (430 aa).

Residue Gln165 participates in (2R)-2-phosphoglycerate binding. The Proton donor role is filled by Glu207. The Mg(2+) site is built by Asp244, Glu287, and Asp314. (2R)-2-phosphoglycerate-binding residues include Lys339, Arg368, Ser369, and Lys390. Lys339 functions as the Proton acceptor in the catalytic mechanism.

The protein belongs to the enolase family. As to quaternary structure, component of the RNA degradosome, a multiprotein complex involved in RNA processing and mRNA degradation. It depends on Mg(2+) as a cofactor.

The protein resides in the cytoplasm. It is found in the secreted. It localises to the cell surface. It carries out the reaction (2R)-2-phosphoglycerate = phosphoenolpyruvate + H2O. It functions in the pathway carbohydrate degradation; glycolysis; pyruvate from D-glyceraldehyde 3-phosphate: step 4/5. In terms of biological role, catalyzes the reversible conversion of 2-phosphoglycerate (2-PG) into phosphoenolpyruvate (PEP). It is essential for the degradation of carbohydrates via glycolysis. The chain is Enolase from Xanthomonas campestris pv. campestris (strain 8004).